Consider the following 229-residue polypeptide: Cytochrome c oxidase subunit 2 (229 aa).

Residues 1-26 (MATWAQLNFQDAASPMMEQLHYFHDH) lie on the Mitochondrial intermembrane side of the membrane. The helical transmembrane segment at 27–48 (TMMVLVIITIMVAYIMGTMFFN) threads the bilayer. The Mitochondrial matrix segment spans residues 49 to 62 (KDVNRYLLDGQKIE). Residues 63–82 (TEWTIVPVFVLVIIAMPSLR) form a helical membrane-spanning segment. The Mitochondrial intermembrane portion of the chain corresponds to 83–229 (LLYLLDEVNE…INWIQNMSEA (147 aa)). 6 residues coordinate Cu cation: His-161, Cys-196, Glu-198, Cys-200, His-204, and Met-207. Glu-198 is a binding site for Mg(2+).

This sequence belongs to the cytochrome c oxidase subunit 2 family. Component of the cytochrome c oxidase (complex IV, CIV), a multisubunit enzyme composed of a catalytic core of 3 subunits and several supernumerary subunits. The complex exists as a monomer or a dimer and forms supercomplexes (SCs) in the inner mitochondrial membrane with ubiquinol-cytochrome c oxidoreductase (cytochrome b-c1 complex, complex III, CIII). Cu cation serves as cofactor.

It localises to the mitochondrion inner membrane. The catalysed reaction is 4 Fe(II)-[cytochrome c] + O2 + 8 H(+)(in) = 4 Fe(III)-[cytochrome c] + 2 H2O + 4 H(+)(out). Component of the cytochrome c oxidase, the last enzyme in the mitochondrial electron transport chain which drives oxidative phosphorylation. The respiratory chain contains 3 multisubunit complexes succinate dehydrogenase (complex II, CII), ubiquinol-cytochrome c oxidoreductase (cytochrome b-c1 complex, complex III, CIII) and cytochrome c oxidase (complex IV, CIV), that cooperate to transfer electrons derived from NADH and succinate to molecular oxygen, creating an electrochemical gradient over the inner membrane that drives transmembrane transport and the ATP synthase. Cytochrome c oxidase is the component of the respiratory chain that catalyzes the reduction of oxygen to water. Electrons originating from reduced cytochrome c in the intermembrane space (IMS) are transferred via the dinuclear copper A center (CU(A)) of subunit 2 and heme A of subunit 1 to the active site in subunit 1, a binuclear center (BNC) formed by heme A3 and copper B (CU(B)). The BNC reduces molecular oxygen to 2 water molecules using 4 electrons from cytochrome c in the IMS and 4 protons from the mitochondrial matrix. This is Cytochrome c oxidase subunit 2 (COII) from Sympetrum striolatum (Common darter dragonfly).